The sequence spans 391 residues: 3-ketoacyl-CoA thiolase (391 aa).

Cys95 serves as the catalytic Acyl-thioester intermediate. Catalysis depends on proton acceptor residues His347 and Cys377.

Belongs to the thiolase-like superfamily. Thiolase family. Heterotetramer of two alpha chains (FadB) and two beta chains (FadA).

The protein resides in the cytoplasm. It carries out the reaction an acyl-CoA + acetyl-CoA = a 3-oxoacyl-CoA + CoA. Its pathway is lipid metabolism; fatty acid beta-oxidation. Its function is as follows. Catalyzes the final step of fatty acid oxidation in which acetyl-CoA is released and the CoA ester of a fatty acid two carbons shorter is formed. The protein is 3-ketoacyl-CoA thiolase of Pseudomonas putida (Arthrobacter siderocapsulatus).